The primary structure comprises 995 residues: Bifunctional glutamine synthetase adenylyltransferase/adenylyl-removing enzyme (995 aa).

The segment at 1–474 is adenylyl removase; it reads MNHSAPGNAD…HYEKLFEGDD (474 aa). 2 glnE regions span residues 122-333 and 637-853; these read RRMK…MKRQ and SYEE…MRRA. Residues 479-995 form an adenylyl transferase region; it reads AKLPALDYSA…LEGTSPASAR (517 aa).

The protein belongs to the GlnE family. Requires Mg(2+) as cofactor.

The enzyme catalyses [glutamine synthetase]-O(4)-(5'-adenylyl)-L-tyrosine + phosphate = [glutamine synthetase]-L-tyrosine + ADP. It catalyses the reaction [glutamine synthetase]-L-tyrosine + ATP = [glutamine synthetase]-O(4)-(5'-adenylyl)-L-tyrosine + diphosphate. Functionally, involved in the regulation of glutamine synthetase GlnA, a key enzyme in the process to assimilate ammonia. When cellular nitrogen levels are high, the C-terminal adenylyl transferase (AT) inactivates GlnA by covalent transfer of an adenylyl group from ATP to specific tyrosine residue of GlnA, thus reducing its activity. Conversely, when nitrogen levels are low, the N-terminal adenylyl removase (AR) activates GlnA by removing the adenylyl group by phosphorolysis, increasing its activity. The regulatory region of GlnE binds the signal transduction protein PII (GlnB) which indicates the nitrogen status of the cell. This Bradyrhizobium diazoefficiens (strain JCM 10833 / BCRC 13528 / IAM 13628 / NBRC 14792 / USDA 110) protein is Bifunctional glutamine synthetase adenylyltransferase/adenylyl-removing enzyme.